We begin with the raw amino-acid sequence, 511 residues long: Cytochrome P450 71A6 (511 aa).

2 helical membrane passes run I1–L15 and V61–P77. Residues N90, N96, and N167 are each glycosylated (N-linked (GlcNAc...) asparagine). Position 450 (C450) interacts with heme.

The protein belongs to the cytochrome P450 family. It depends on heme as a cofactor.

The protein localises to the membrane. This chain is Cytochrome P450 71A6 (CYP71A6), found in Nepeta racemosa (Catmint).